We begin with the raw amino-acid sequence, 99 residues long: Acylphosphatase (99 aa).

Positions 5–97 (VRQIVIRGRV…RPGERFSQLP (93 aa)) constitute an Acylphosphatase-like domain. Catalysis depends on residues Arg20 and Asn38.

The protein belongs to the acylphosphatase family.

It catalyses the reaction an acyl phosphate + H2O = a carboxylate + phosphate + H(+). This Nitrobacter hamburgensis (strain DSM 10229 / NCIMB 13809 / X14) protein is Acylphosphatase (acyP).